The sequence spans 437 residues: Glutamate-1-semialdehyde 2,1-aminomutase (437 aa).

Lysine 274 bears the N6-(pyridoxal phosphate)lysine mark.

It belongs to the class-III pyridoxal-phosphate-dependent aminotransferase family. HemL subfamily. As to quaternary structure, homodimer. Requires pyridoxal 5'-phosphate as cofactor.

The protein resides in the cytoplasm. It carries out the reaction (S)-4-amino-5-oxopentanoate = 5-aminolevulinate. Its pathway is porphyrin-containing compound metabolism; protoporphyrin-IX biosynthesis; 5-aminolevulinate from L-glutamyl-tRNA(Glu): step 2/2. This Verminephrobacter eiseniae (strain EF01-2) protein is Glutamate-1-semialdehyde 2,1-aminomutase.